A 717-amino-acid polypeptide reads, in one-letter code: MSRRSQRLTRYSQGDDDGSSSSGGSSVAGSQSTLFKDSPLRTLKRKSSNMKRLSPAPQLGPSSDAHTSYYSESLVHESWFPPRSSLEELHGDANWGEDLRVRRRRGTGGSESSRASGLVGRKATEDFLGSSSGYSSEDDYVGYSDVDQQSSSSRLRSAVSRAGSLLWMVATSPGRLFRLLYWWAGTTWYRLTTAASLLDVFVLTRRFSSLKTFLWFLLPLLLLTCLTYGAWYFYPYGLQTFHPALVSWWAAKDSRRPDEGWEARDSSPHFQAEQRVMSRVHSLERRLEALAAEFSSNWQKEAMRLERLELRQGAPGQGGGGGLSHEDTLALLEGLVSRREAALKEDFRRETAARIQEELSALRAEHQQDSEDLFKKIVRASQESEARIQQLKSEWQSMTQESFQESSVKELRRLEDQLAGLQQELAALALKQSSVAEEVGLLPQQIQAVRDDVESQFPAWISQFLARGGGGRVGLLQREEMQAQLRELESKILTHVAEMQGKSAREAAASLSLTLQKEGVIGVTEEQVHHIVKQALQRYSEDRIGLADYALESGGASVISTRCSETYETKTALLSLFGIPLWYHSQSPRVILQPDVHPGNCWAFQGPQGFAVVRLSARIRPTAVTLEHVPKALSPNSTISSAPKDFAIFGFDEDLQQEGTLLGKFTYDQDGEPIQTFHFQAPTMATYQVVELRILTNWGHPEYTCIYRFRVHGEPAH.

Positions 1-66 (MSRRSQRLTR…PQLGPSSDAH (66 aa)) are disordered. The segment at 1–139 (MSRRSQRLTR…SSSGYSSEDD (139 aa)) is LMNA-binding. At 1-212 (MSRRSQRLTR…LTRRFSSLKT (212 aa)) the chain is on the nuclear side. Serine 12 carries the post-translational modification Phosphoserine. Residues 19-32 (SSSSGGSSVAGSQS) are compositionally biased toward low complexity. 2 positions are modified to phosphoserine: serine 38 and serine 54. Threonine 107 carries the phosphothreonine modification. Phosphoserine occurs at positions 110, 113, 116, and 136. A helical membrane pass occupies residues 213 to 233 (FLWFLLPLLLLTCLTYGAWYF). Residues 234–717 (YPYGLQTFHP…RFRVHGEPAH (484 aa)) are Perinuclear space-facing. 3 coiled-coil regions span residues 273-296 (EQRV…EFSS), 348-440 (RRET…EEVG), and 475-506 (LLQR…SARE). The sufficient for interaction with SYNE1 and SYNE2 stretch occupies residues 507–717 (AAASLSLTLQ…RFRVHGEPAH (211 aa)). One can recognise an SUN domain in the interval 555–716 (GASVISTRCS…YRFRVHGEPA (162 aa)). A disulfide bond links cysteine 601 and cysteine 705. Asparagine 636 is a glycosylation site (N-linked (GlcNAc...) asparagine).

Core component of the LINC complex which is composed of inner nuclear membrane SUN domain-containing proteins coupled to outer nuclear membrane KASH domain-containing nesprins. SUN and KASH domain-containing proteins seem to bind each other promiscuously; however, differentially expression of LINC complex constituents is giving rise to specific assemblies. At least SUN1/2-containing core LINC complexes are proposed to be hexameric composed of three protomers of each KASH and SUN domain-containing protein. Interacts with SYNE2; the SUN2:SYNE2/KASH2 LINC complex is a heterohexamer; the homotrimeric cloverleave-like conformation of the SUN domain is a prerequisite for LINC complex formation in which three separate SYNE2/KASH2 peptides bind at the interface of adjacent SUN domains. Component of a probable SUN2:KASH5 LINC complex. Interacts with SYNE1 and SYNE3; probably forming respective LINC complexes. Interacts with A-type lamin. Interaction with lamins B1 and C is hardly detectable. Interacts with EMD and RAB5A. Interacts with TMEM43. Interacts with TMEM201. The disulfide bond with SYNE2 is required for stability of the SUN2:SYNE2/KASH2 LINC complex under tensile forces though not required for the interaction. The disulfide bond is proposed to be conserved in LINC complexes involved in force transmission. Widely expressed. Highly expressed in heart, lung and muscle. Weakly expressed in fetal heart. Slightly overexpressed in some heart tissues form patients with congenital heart defects.

The protein resides in the nucleus inner membrane. It localises to the nucleus envelope. It is found in the endosome membrane. Its function is as follows. As a component of the LINC (LInker of Nucleoskeleton and Cytoskeleton) complex, involved in the connection between the nuclear lamina and the cytoskeleton. The nucleocytoplasmic interactions established by the LINC complex play an important role in the transmission of mechanical forces across the nuclear envelope and in nuclear movement and positioning. Specifically, SYNE2 and SUN2 assemble in arrays of transmembrane actin-associated nuclear (TAN) lines which are bound to F-actin cables and couple the nucleus to retrograde actin flow during actin-dependent nuclear movement. Required for interkinetic nuclear migration (INM) and essential for nucleokinesis and centrosome-nucleus coupling during radial neuronal migration in the cerebral cortex and during glial migration. Required for nuclear migration in retinal photoreceptor progenitors implicating association with cytoplasmic dynein-dynactin and kinesin motor complexes, and probably B-type lamins; SUN1 and SUN2 seem to act redundantly. The SUN1/2:KASH5 LINC complex couples telomeres to microtubules during meiosis; SUN1 and SUN2 seem to act at least partial redundantly. Anchors chromosome movement in the prophase of meiosis and is involved in selective gene expression of coding and non-coding RNAs needed for gametogenesis. Required for telomere attachment to nuclear envelope and gametogenesis. May also function on endocytic vesicles as a receptor for RAB5-GDP and participate in the activation of RAB5. This chain is SUN domain-containing protein 2, found in Homo sapiens (Human).